A 957-amino-acid chain; its full sequence is Protein translocase subunit SecA (957 aa).

Residues glutamine 87, glycine 105–threonine 109, and aspartate 512 contribute to the ATP site. A disordered region spans residues alanine 924–lysine 957. Zn(2+)-binding residues include cysteine 943, cysteine 945, cysteine 954, and cysteine 955.

The protein belongs to the SecA family. In terms of assembly, monomer and homodimer. Part of the essential Sec protein translocation apparatus which comprises SecA, SecYEG and auxiliary proteins SecDF-YajC and YidC. Zn(2+) is required as a cofactor.

It is found in the cell inner membrane. It localises to the cytoplasm. It carries out the reaction ATP + H2O + cellular proteinSide 1 = ADP + phosphate + cellular proteinSide 2.. Part of the Sec protein translocase complex. Interacts with the SecYEG preprotein conducting channel. Has a central role in coupling the hydrolysis of ATP to the transfer of proteins into and across the cell membrane, serving as an ATP-driven molecular motor driving the stepwise translocation of polypeptide chains across the membrane. The polypeptide is Protein translocase subunit SecA (Geobacter sp. (strain M21)).